A 376-amino-acid polypeptide reads, in one-letter code: Succinyl-diaminopimelate desuccinylase (376 aa).

His-67 is a binding site for Zn(2+). The active site involves Asp-69. Asp-100 provides a ligand contact to Zn(2+). Catalysis depends on Glu-134, which acts as the Proton acceptor. Positions 135, 163, and 349 each coordinate Zn(2+).

The protein belongs to the peptidase M20A family. DapE subfamily. As to quaternary structure, homodimer. The cofactor is Zn(2+). It depends on Co(2+) as a cofactor.

The enzyme catalyses N-succinyl-(2S,6S)-2,6-diaminopimelate + H2O = (2S,6S)-2,6-diaminopimelate + succinate. The protein operates within amino-acid biosynthesis; L-lysine biosynthesis via DAP pathway; LL-2,6-diaminopimelate from (S)-tetrahydrodipicolinate (succinylase route): step 3/3. Catalyzes the hydrolysis of N-succinyl-L,L-diaminopimelic acid (SDAP), forming succinate and LL-2,6-diaminopimelate (DAP), an intermediate involved in the bacterial biosynthesis of lysine and meso-diaminopimelic acid, an essential component of bacterial cell walls. The polypeptide is Succinyl-diaminopimelate desuccinylase (Pseudoalteromonas translucida (strain TAC 125)).